Here is a 92-residue protein sequence, read N- to C-terminus: Small ribosomal subunit protein bS20 (92 aa).

Disordered stretches follow at residues 1–25 (MALRHKSAQKRHRQSLKRRAINRAK) and 68–92 (HKNAAARKKSRLAKAINKAKAAQQA). The segment covering 80–92 (AKAINKAKAAQQA) has biased composition (low complexity).

Belongs to the bacterial ribosomal protein bS20 family.

Functionally, binds directly to 16S ribosomal RNA. This Deinococcus radiodurans (strain ATCC 13939 / DSM 20539 / JCM 16871 / CCUG 27074 / LMG 4051 / NBRC 15346 / NCIMB 9279 / VKM B-1422 / R1) protein is Small ribosomal subunit protein bS20.